The primary structure comprises 497 residues: Putative endothelial lipase (497 aa).

Residues 1 to 23 (MRACPFLLLLLLPLLLSLGRIAA) form the signal peptide. An intrachain disulfide couples C73 to C86. N-linked (GlcNAc...) asparagine glycans are attached at residues N89 and N145. S178 acts as the Nucleophile in catalysis. The active-site Charge relay system is D202. C262 and C282 form a disulfide bridge. The Charge relay system role is filled by H284. Intrachain disulfides connect C307-C326 and C318-C321. Residue 335–347 (KMRNKRNSKMYLK) coordinates heparin. Positions 357–492 (FHYQLKIHVF…CLKMVKVEKH (136 aa)) constitute a PLAT domain. N403 carries an N-linked (GlcNAc...) asparagine glycan.

The protein belongs to the AB hydrolase superfamily. Lipase family. As to quaternary structure, head to tail homodimer. Expressed by the venom gland.

The protein localises to the secreted. The catalysed reaction is a triacylglycerol + H2O = a diacylglycerol + a fatty acid + H(+). Its activity is regulated as follows. Inhibited by serum. Has phospholipase and triglyceride lipase activities. The chain is Putative endothelial lipase from Crotalus adamanteus (Eastern diamondback rattlesnake).